The chain runs to 333 residues: NADH-quinone oxidoreductase subunit H (333 aa).

8 helical membrane passes run 15-35 (FFIFFGLAVLLLFAVLGFVTY), 88-108 (FILAPVIAFAPAFMVLAVIPF), 117-137 (IGVGLLYYIAVSGITTIGVVT), 159-179 (ISYEIPLVMSVIGIVLLAGSL), 191-211 (VWYIFVQPIGFVVFLIAAVAE), 239-259 (WAFFMLSEYVYFFGMASLITV), 274-296 (IPGAVWFALKFSSVVFLLIWFRV), and 313-333 (VLLPIALANIFLTALIKELFF).

The protein belongs to the complex I subunit 1 family. NDH-1 is composed of 14 different subunits. Subunits NuoA, H, J, K, L, M, N constitute the membrane sector of the complex.

It is found in the cell membrane. It catalyses the reaction a quinone + NADH + 5 H(+)(in) = a quinol + NAD(+) + 4 H(+)(out). In terms of biological role, NDH-1 shuttles electrons from NADH, via FMN and iron-sulfur (Fe-S) centers, to quinones in the respiratory chain. The immediate electron acceptor for the enzyme in this species is believed to be ubiquinone. Couples the redox reaction to proton translocation (for every two electrons transferred, four hydrogen ions are translocated across the cytoplasmic membrane), and thus conserves the redox energy in a proton gradient. This subunit may bind ubiquinone. This chain is NADH-quinone oxidoreductase subunit H, found in Bacillus anthracis (strain A0248).